The primary structure comprises 966 residues: Next to BRCA1 gene 1 protein (966 aa).

Residues 4–85 (QVTLNVTFKN…NQLQMQVHEG (82 aa)) form the PB1 domain. Serine 116 is subject to Phosphoserine. A ZZ-type zinc finger spans residues 212 to 264 (SWHIACNNCQRRIVGVRYQCSLCPSYNICEDCEAGPYGHDTNHVLLKLRRPVV). Residues cysteine 217, cysteine 220, cysteine 231, cysteine 234, cysteine 240, cysteine 243, histidine 250, and histidine 254 each coordinate Zn(2+). Positions 542–636 (ASERELYIPS…KRKAENIASV (95 aa)) are ATG8 family protein-binding. Threonine 586 carries the post-translational modification Phosphothreonine; by GSK3-alpha. Residues serine 590, serine 596, and serine 625 each carry the phosphoserine modification. The segment covering 699-718 (EAVMEEEEDEEDEEEEDELK) has biased composition (acidic residues). Disordered regions lie at residues 699-728 (EAVM…SSAS), 750-792 (MYSS…QPQE), and 848-879 (VPDQ…HHGS). Residues 727–738 (ASSEDYIIILPE) are ATG8 family protein-binding. The 45-residue stretch at 913-957 (SEDQTAALMAHLFEMGFCDRQLNLRLLKKHNYNILQVVTELLQLN) folds into the UBA domain.

In terms of assembly, homooligomer and heterooligomer. Interacts with TRIM55. Interacts with titin/TTN. Interacts with RNF29, USP8, MAP1LC3A, MAP1LC3B, MAP1LC3C, GABARAP, GABARAPL1 and GABARAPL2. Binds to ubiquitin and ubiquitinated proteins. Interacts with SQSTM1. Interacts with TAX1BP1. Interacts with IRF3; this interaction mediates autophagic degradation of IRF3. Interacts with IL12A and IL12B. (Microbial infection) Interacts with Influenza A virus protein PB1; this interaction promotes NBR1-mediated selective autophagic degradation of MAVS. In terms of processing, (Microbial infection) Cleaved by S.pyogenes SpeB protease; leading to its degradation. Degradation by SpeB prevents autophagy, promoting to S.pyogenes intracellular replication. Post-translationally, phosphorylated by GSK3A; this phosphorylation inhibits NBR1 involvement in the formation of ubiquitinated protein aggregates.

Its subcellular location is the cytoplasm. It is found in the cytoplasmic vesicle. The protein resides in the autophagosome. It localises to the lysosome. The protein localises to the myofibril. Its subcellular location is the sarcomere. It is found in the m line. Functionally, ubiquitin-binding autophagy adapter that participates in different processes including host defense or intracellular homeostasis. Possesses a double function during the selective autophagy by acting as a shuttle bringing ubiquitinated proteins to autophagosomes and also by participating in the formation of protein aggregates. Plays a role in the regulation of the innate immune response by modulating type I interferon production and targeting ubiquitinated IRF3 for autophagic degradation. In response to oxidative stress, promotes an increase in SQSTM1 levels, phosphorylation, and body formation by preventing its autophagic degradation. In turn, activates the KEAP1-NRF2/NFE2L2 antioxidant pathway. Also plays non-autophagy role by mediating the shuttle of IL-12 to late endosome for subsequent secretion. The protein is Next to BRCA1 gene 1 protein (NBR1) of Homo sapiens (Human).